Here is a 142-residue protein sequence, read N- to C-terminus: Large ribosomal subunit protein uL13 (142 aa).

Belongs to the universal ribosomal protein uL13 family. As to quaternary structure, part of the 50S ribosomal subunit.

This protein is one of the early assembly proteins of the 50S ribosomal subunit, although it is not seen to bind rRNA by itself. It is important during the early stages of 50S assembly. This Vibrio cholerae serotype O1 (strain M66-2) protein is Large ribosomal subunit protein uL13.